The chain runs to 435 residues: Methylenetetrahydrofolate--tRNA-(uracil-5-)-methyltransferase TrmFO (435 aa).

9-14 is a binding site for FAD; that stretch reads GAGLAG.

The protein belongs to the MnmG family. TrmFO subfamily. FAD serves as cofactor.

It localises to the cytoplasm. The enzyme catalyses uridine(54) in tRNA + (6R)-5,10-methylene-5,6,7,8-tetrahydrofolate + NADH + H(+) = 5-methyluridine(54) in tRNA + (6S)-5,6,7,8-tetrahydrofolate + NAD(+). The catalysed reaction is uridine(54) in tRNA + (6R)-5,10-methylene-5,6,7,8-tetrahydrofolate + NADPH + H(+) = 5-methyluridine(54) in tRNA + (6S)-5,6,7,8-tetrahydrofolate + NADP(+). Functionally, catalyzes the folate-dependent formation of 5-methyl-uridine at position 54 (M-5-U54) in all tRNAs. The protein is Methylenetetrahydrofolate--tRNA-(uracil-5-)-methyltransferase TrmFO of Staphylococcus aureus (strain Newman).